The primary structure comprises 236 residues: MDIKLKDFEGPLDLLLHLVSKYQVDIYDVPITEVIEQYLAYVATLQAMKLEVTGEYMVMASQLMLIKSRKLLPKVADNAELEDDLEQDLLSQIEEYRRFKLLGEKMSLQHDDRALYYSKPKLELVYEDAELLHDKSTIDLFLAFSKVIAKKQEEFSKSHTTIVRDEYKIEDMMEVVRQRCAGKSRLALQEIFAETKDMNEVITLFLATLELVKVQEVQVIQEENFGNIYLVGRGNE.

Belongs to the ScpA family. In terms of assembly, component of a cohesin-like complex composed of ScpA, ScpB and the Smc homodimer, in which ScpA and ScpB bind to the head domain of Smc. The presence of the three proteins is required for the association of the complex with DNA.

Its subcellular location is the cytoplasm. In terms of biological role, participates in chromosomal partition during cell division. May act via the formation of a condensin-like complex containing Smc and ScpB that pull DNA away from mid-cell into both cell halves. The chain is Segregation and condensation protein A from Streptococcus sanguinis (strain SK36).